Consider the following 284-residue polypeptide: MKLVLVSGRSGSGKSVLLRMLEDLGYYCVDNLPLPMMGTLLKELSGNTNLVAISVDIRNLPEKESELIKHLTNLPDGVELLSFFLNSSDEVLLKRYNETRRLHPLSHDNVSLKEAIEIEGRSLEPLANIVDHYIDTSTLNIYDLNDQVREILLGNLDKELMINFESFGFKHGMPTEADFMFDVRFLPNPHWEPDLRPMTGLDKPVQDFLNERPRVNQFIKQIEDLLETWLPDLERNNRSYLTIAIGCTGGQHRSVYITERLAAHFKDGKHKIQVRHRELKNADH.

Residue 8–15 coordinates ATP; it reads GRSGSGKS. 56 to 59 contacts GTP; sequence DIRN.

Belongs to the RapZ-like family.

Its function is as follows. Displays ATPase and GTPase activities. The chain is Nucleotide-binding protein Shal_3708 from Shewanella halifaxensis (strain HAW-EB4).